Reading from the N-terminus, the 306-residue chain is Homoserine kinase (306 aa).

ATP is bound at residue 91–101; the sequence is PLARGLGSSAA.

The protein belongs to the GHMP kinase family. Homoserine kinase subfamily.

The protein resides in the cytoplasm. The catalysed reaction is L-homoserine + ATP = O-phospho-L-homoserine + ADP + H(+). Its pathway is amino-acid biosynthesis; L-threonine biosynthesis; L-threonine from L-aspartate: step 4/5. In terms of biological role, catalyzes the ATP-dependent phosphorylation of L-homoserine to L-homoserine phosphate. The polypeptide is Homoserine kinase (Bacillus licheniformis (strain ATCC 14580 / DSM 13 / JCM 2505 / CCUG 7422 / NBRC 12200 / NCIMB 9375 / NCTC 10341 / NRRL NRS-1264 / Gibson 46)).